Here is a 554-residue protein sequence, read N- to C-terminus: Hydroxylamine reductase (554 aa).

[2Fe-2S] cluster contacts are provided by C3, C6, C18, and C25. Hybrid [4Fe-2O-2S] cluster is bound by residues H252, E276, C320, C408, C436, C461, E495, and K497. Residue C408 is modified to Cysteine persulfide.

This sequence belongs to the HCP family. [2Fe-2S] cluster is required as a cofactor. Requires hybrid [4Fe-2O-2S] cluster as cofactor.

The protein localises to the cytoplasm. It catalyses the reaction A + NH4(+) + H2O = hydroxylamine + AH2 + H(+). Catalyzes the reduction of hydroxylamine to form NH(3) and H(2)O. The sequence is that of Hydroxylamine reductase from Shewanella pealeana (strain ATCC 700345 / ANG-SQ1).